We begin with the raw amino-acid sequence, 406 residues long: MSIKKLDYWLIESLMDTDLYKITMLQAYYHAPEFRLVDIEWKFACRNRNGLDLSILIPEIFRQLEHLCTLSFSDAELDYLAGFSFIKPDFIEFLRIFRLDMRFVHIEAKGEDISLRFSGPLLHVSLLEIYTLAIISELHTFVNCGGIDLKVARERLAEKIAYLKAEDDLSGFSFADFGTRRRASKAWHEEVLLTLKEQLPASFSGTSSLHFARTLGLPPIGTMAHEWFQSWQAVTRLADAQKAALEGWVQEYRGRLGIALTDCYSMDSFIRDFSDPYFGKLYDGLRHDSGCPFVWAEKAILMYQQMGIDPLSKTLVFSDGLNFPRMLEIWKRFKGRAKISFGIGTNLTNDVGNVPLNIVIKMIAANGRPIAKISDEPGKSMCEDLGYLQYLASQYGIDPSLVKISQ.

Histidine 225 is modified (phosphohistidine; by autocatalysis).

It belongs to the NAPRTase family. Transiently phosphorylated on a His residue during the reaction cycle. Phosphorylation strongly increases the affinity for substrates and increases the rate of nicotinate D-ribonucleotide production. Dephosphorylation regenerates the low-affinity form of the enzyme, leading to product release.

It carries out the reaction nicotinate + 5-phospho-alpha-D-ribose 1-diphosphate + ATP + H2O = nicotinate beta-D-ribonucleotide + ADP + phosphate + diphosphate. It participates in cofactor biosynthesis; NAD(+) biosynthesis; nicotinate D-ribonucleotide from nicotinate: step 1/1. Its function is as follows. Catalyzes the synthesis of beta-nicotinate D-ribonucleotide from nicotinate and 5-phospho-D-ribose 1-phosphate at the expense of ATP. This Psychromonas ingrahamii (strain DSM 17664 / CCUG 51855 / 37) protein is Nicotinate phosphoribosyltransferase.